The primary structure comprises 73 residues: Translation initiation factor IF-1 (73 aa).

The S1-like domain maps to 1–72 (MAKEDVIEVE…SRGRITYRYR (72 aa)).

Belongs to the IF-1 family. Component of the 30S ribosomal translation pre-initiation complex which assembles on the 30S ribosome in the order IF-2 and IF-3, IF-1 and N-formylmethionyl-tRNA(fMet); mRNA recruitment can occur at any time during PIC assembly.

The protein resides in the cytoplasm. Its function is as follows. One of the essential components for the initiation of protein synthesis. Stabilizes the binding of IF-2 and IF-3 on the 30S subunit to which N-formylmethionyl-tRNA(fMet) subsequently binds. Helps modulate mRNA selection, yielding the 30S pre-initiation complex (PIC). Upon addition of the 50S ribosomal subunit IF-1, IF-2 and IF-3 are released leaving the mature 70S translation initiation complex. The chain is Translation initiation factor IF-1 from Rubrobacter xylanophilus (strain DSM 9941 / JCM 11954 / NBRC 16129 / PRD-1).